The chain runs to 339 residues: Geranylgeranyl pyrophosphate synthase AN1592 (339 aa).

Residues Lys-41, Arg-44, and His-73 each contribute to the isopentenyl diphosphate site. Positions 80 and 84 each coordinate Mg(2+). Arg-89 contributes to the dimethylallyl diphosphate binding site. Arg-90 is a binding site for isopentenyl diphosphate. Dimethylallyl diphosphate-binding residues include Lys-192, Thr-193, and Gln-228. Asp-231 contributes to the Mg(2+) binding site. Residues Asn-235, Lys-245, and Lys-255 each contribute to the dimethylallyl diphosphate site.

Belongs to the FPP/GGPP synthase family. Requires Mg(2+) as cofactor.

The enzyme catalyses isopentenyl diphosphate + dimethylallyl diphosphate = (2E)-geranyl diphosphate + diphosphate. The catalysed reaction is isopentenyl diphosphate + (2E)-geranyl diphosphate = (2E,6E)-farnesyl diphosphate + diphosphate. It carries out the reaction isopentenyl diphosphate + (2E,6E)-farnesyl diphosphate = (2E,6E,10E)-geranylgeranyl diphosphate + diphosphate. Its pathway is secondary metabolite biosynthesis. Its function is as follows. Geranylgeranyl pyrophosphate synthase; part of the gene cluster that mediates the biosynthesis of erinacines, cyathane-xylosides that show unique biological activities, including leishmanicidal activity, stimulating activity for nerve growth-factor synthesis, and agonistic activity toward the kappa opioid receptor. The geranylgeranyl diphosphate (GGPP) synthase eriE catalyzes the first step in erinacines biosynthesis via conversion of farnesyl pyrophosphate and isopentyl pyrophosphate into geranylgeranyl pyrophosphate (GGPP). GGPP is then substrate of the diterpene cyclase eriG for the production of cyatha-3,12-diene. The cytochrome P450 monooxygenase eriI then hydroxylates cyatha-3,12-diene at C-14 of the seven-membered ring to produce erinacol, which is further hydroxylated at C-15 by the cytochrome P450 monooxygenase eriC to yield cyathadiol. The cytochrome P450 monooxygenase eriA then catalyzes C-11 hydroxylation in the presence of the short chain dehydrogenase/reductase (SDR) eriH, which leads to the production of cyathatriol. The acetyltransferase eriL converts cyathatriol into 11-O-acetyl-cyathatriol. The SDR eriH catalyzes further oxidation of 11-O-acetyl-cyathatriol into 1-O-acetylcyathin A3. Finally, the glycosyl transferase eriJ tranfers xylose from UDP-xylose onto C-14 of 11-O-acetyl-cyathatriol to form eracine Q. EriJ is also able to convert 11-O-acetyl-cyathatriol to eracine Q2 by using UDP-D-glucose as cosubstrate, but at a lower rate. In the absence of eriL and eriJ, the SDR eriH is able to convert cyathatriol to cyathin A3; this is likely a switching mechanism in the biosynthesis of cyathins (C-14 ketogroup)and erinacines (C-14 glycosylated group). The roles of the SDR eriB, the polyprenyl transferase eriF and the dehydrogenase eriK have still to be identified. The protein is Geranylgeranyl pyrophosphate synthase AN1592 of Hericium erinaceus (Lion's mane mushroom).